We begin with the raw amino-acid sequence, 447 residues long: Protein odr-4 homolog (447 aa).

Helical transmembrane passes span 82–102 (MLPG…ELAD) and 425–445 (IGVI…FHYF).

The protein belongs to the ODR-4 family. In terms of tissue distribution, ubiquitously expressed.

It is found in the membrane. Its function is as follows. May play a role in the trafficking of a subset of G-protein coupled receptors. The polypeptide is Protein odr-4 homolog (Odr4) (Mus musculus (Mouse)).